The sequence spans 375 residues: Alcohol dehydrogenase 1 (375 aa).

N-acetylserine is present on Ser1. Residues Cys46, His67, Cys97, Cys100, Cys103, Cys111, and Cys174 each contribute to the Zn(2+) site. Residues 199–204, Asp223, Lys228, 293–295, and Arg370 contribute to the NAD(+) site; these read GLGGVG and VGV.

It belongs to the zinc-containing alcohol dehydrogenase family. Class-I subfamily. Homodimer. Requires Zn(2+) as cofactor.

Its subcellular location is the cytoplasm. The catalysed reaction is a primary alcohol + NAD(+) = an aldehyde + NADH + H(+). It carries out the reaction a secondary alcohol + NAD(+) = a ketone + NADH + H(+). This chain is Alcohol dehydrogenase 1, found in Naja naja (Indian cobra).